A 185-amino-acid polypeptide reads, in one-letter code: Ribosome-recycling factor (185 aa).

It belongs to the RRF family.

The protein localises to the cytoplasm. Its function is as follows. Responsible for the release of ribosomes from messenger RNA at the termination of protein biosynthesis. May increase the efficiency of translation by recycling ribosomes from one round of translation to another. This Actinobacillus succinogenes (strain ATCC 55618 / DSM 22257 / CCUG 43843 / 130Z) protein is Ribosome-recycling factor.